A 151-amino-acid chain; its full sequence is Large-conductance mechanosensitive channel (151 aa).

The next 2 membrane-spanning stretches (helical) occupy residues G12–T32 and V71–V91. Residues A122 to Q151 are disordered.

It belongs to the MscL family. Homopentamer.

Its subcellular location is the cell membrane. Its function is as follows. Channel that opens in response to stretch forces in the membrane lipid bilayer. May participate in the regulation of osmotic pressure changes within the cell. The sequence is that of Large-conductance mechanosensitive channel from Mycobacterium tuberculosis (strain CDC 1551 / Oshkosh).